A 271-amino-acid polypeptide reads, in one-letter code: Glutamate racemase (271 aa).

Residues 9 to 10 (DS) and 41 to 42 (YG) each bind substrate. The active-site Proton donor/acceptor is the Cys-72. 73–74 (NT) serves as a coordination point for substrate. Catalysis depends on Cys-183, which acts as the Proton donor/acceptor. 184 to 185 (TH) is a substrate binding site.

It belongs to the aspartate/glutamate racemases family.

It catalyses the reaction L-glutamate = D-glutamate. It participates in cell wall biogenesis; peptidoglycan biosynthesis. Its function is as follows. Provides the (R)-glutamate required for cell wall biosynthesis. This chain is Glutamate racemase, found in Exiguobacterium sibiricum (strain DSM 17290 / CCUG 55495 / CIP 109462 / JCM 13490 / 255-15).